The sequence spans 139 residues: Flagellar basal body rod protein FlgB (139 aa).

This sequence belongs to the flagella basal body rod proteins family. The basal body constitutes a major portion of the flagellar organelle and consists of a number of rings mounted on a central rod. In Gram-negative bacteria, at least four rings, L, P, S and M are present, whereas Gram-positive bacteria lack the L and P rings. The rod consists of about 26 subunits of FlgG in the distal portion, and FlgB, FlgC and FlgF build up the proximal portion of the rod with about 6 subunits each. Rod assembly occurs by export via the flagellum-specific pathway of its constituent proteins and by their incorporation into the rod structure in the probable order of FlgB, FlgC, FlgF and FlgG. Another protein, FliE, also assembles onto the stable rod structure.

The protein resides in the bacterial flagellum basal body. Its function is as follows. Structural component of flagellum, the bacterial motility apparatus. Part of the rod structure of flagellar basal body. This is Flagellar basal body rod protein FlgB from Proteus mirabilis.